A 292-amino-acid chain; its full sequence is Alpha-soluble NSF attachment protein (292 aa).

This sequence belongs to the SNAP family.

It localises to the cytoplasmic vesicle. It is found in the membrane. In terms of biological role, required for vesicular transport between the endoplasmic reticulum and the Golgi apparatus. Also between the endosome and phagosome. The protein is Alpha-soluble NSF attachment protein of Drosophila melanogaster (Fruit fly).